The following is a 1236-amino-acid chain: ATP-dependent helicase/nuclease subunit A (1236 aa).

Positions 4–473 constitute a UvrD-like helicase ATP-binding domain; it reads VKWTKEQQQA…VNLFKNFRSR (470 aa). 25 to 32 lines the ATP pocket; that stretch reads AAAGSGKT. Residues 512–806 form the UvrD-like helicase C-terminal domain; the sequence is YEDKSLVGGP…RIMSIHKSKG (295 aa).

The protein belongs to the helicase family. AddA subfamily. Heterodimer of AddA and AddB/RexB. Requires Mg(2+) as cofactor.

The catalysed reaction is Couples ATP hydrolysis with the unwinding of duplex DNA by translocating in the 3'-5' direction.. It catalyses the reaction ATP + H2O = ADP + phosphate + H(+). Functionally, the heterodimer acts as both an ATP-dependent DNA helicase and an ATP-dependent, dual-direction single-stranded exonuclease. Recognizes the chi site generating a DNA molecule suitable for the initiation of homologous recombination. The AddA nuclease domain is required for chi fragment generation; this subunit has the helicase and 3' -&gt; 5' nuclease activities. The sequence is that of ATP-dependent helicase/nuclease subunit A from Clostridium novyi (strain NT).